A 260-amino-acid polypeptide reads, in one-letter code: Kallikrein-8 (260 aa).

The first 28 residues, 1 to 28, serve as a signal peptide directing secretion; it reads MGRPPPCAIQPWILLLLFMGAWAGLTRA. Positions 29–32 are excised as a propeptide; that stretch reads QGSK. A Peptidase S1 domain is found at 33-257; the sequence is ILEGRECIPH…YTTWIKKTMD (225 aa). Disulfide bonds link cysteine 39/cysteine 173, cysteine 58/cysteine 74, cysteine 145/cysteine 246, cysteine 152/cysteine 218, cysteine 184/cysteine 198, and cysteine 208/cysteine 233. The active-site Charge relay system is histidine 73. N-linked (GlcNAc...) asparagine glycosylation is present at asparagine 110. Aspartate 120 serves as the catalytic Charge relay system. The Charge relay system role is filled by serine 212.

This sequence belongs to the peptidase S1 family. Kallikrein subfamily. Interacts with SPINK9. Expressed in the limbic system of mouse brain and is localized at highest concentration in pyramidal neurons of the hippocampal CA1-3 subfields. Also detected in spinal cord gray matter and in keratinized stratified epithelia of epidermis, hair, tongue, palate, nasal cavity, pharynges, esophagus and forestomach. In skin and mucus membranes, expressed in stratum spinosum and stratum granulosum. Expressed during estrus in vaginal epithelial cells but not stromal cells. Within the vaginal epithelium, expressed in prickle cells, granular cells and parakeratotic cells but not in basal cells. Not expressed in uterus. Expressed in the keratinocytes.

Its subcellular location is the secreted. The protein resides in the cytoplasm. It catalyses the reaction Cleavage of amide substrates following the basic amino acids Arg or Lys at the P1 position, with a preference for Arg over Lys.. Its activity is regulated as follows. Strongly inhibited by diisopropyl fluorophosphate, leupeptin and (4-amidinophenyl)methanesulfonyl 1-fluoride. In terms of biological role, serine protease which is capable of degrading a number of proteins such as casein, fibrinogen, kininogen, fibronectin and collagen type IV. Also cleaves L1CAM in response to increased neural activity. Induces neurite outgrowth and fasciculation of cultured hippocampal neurons. Plays a role in the formation and maturation of orphan and small synaptic boutons in the Schaffer-collateral pathway, regulates Schaffer-collateral long-term potentiation in the hippocampus and is required for memory acquisition and synaptic plasticity. Involved in skin desquamation and keratinocyte proliferation. Plays a role in the secondary phase of pathogenesis following spinal cord injury. In Mus musculus (Mouse), this protein is Kallikrein-8 (Klk8).